A 143-amino-acid polypeptide reads, in one-letter code: SsrA-binding protein (143 aa).

The protein belongs to the SmpB family.

The protein resides in the cytoplasm. In terms of biological role, required for rescue of stalled ribosomes mediated by trans-translation. Binds to transfer-messenger RNA (tmRNA), required for stable association of tmRNA with ribosomes. tmRNA and SmpB together mimic tRNA shape, replacing the anticodon stem-loop with SmpB. tmRNA is encoded by the ssrA gene; the 2 termini fold to resemble tRNA(Ala) and it encodes a 'tag peptide', a short internal open reading frame. During trans-translation Ala-aminoacylated tmRNA acts like a tRNA, entering the A-site of stalled ribosomes, displacing the stalled mRNA. The ribosome then switches to translate the ORF on the tmRNA; the nascent peptide is terminated with the 'tag peptide' encoded by the tmRNA and targeted for degradation. The ribosome is freed to recommence translation, which seems to be the essential function of trans-translation. The polypeptide is SsrA-binding protein (Mycoplasmoides gallisepticum (strain R(low / passage 15 / clone 2)) (Mycoplasma gallisepticum)).